The sequence spans 150 residues: Small ribosomal subunit protein uS13 (150 aa).

The interval 131 to 150 is disordered; sequence QRTKSTFRRGPTVGVSRRKK.

This sequence belongs to the universal ribosomal protein uS13 family. Part of the 30S ribosomal subunit. Forms a loose heterodimer with protein S19. Forms two bridges to the 50S subunit in the 70S ribosome.

In terms of biological role, located at the top of the head of the 30S subunit, it contacts several helices of the 16S rRNA. In the 70S ribosome it contacts the 23S rRNA (bridge B1a) and protein L5 of the 50S subunit (bridge B1b), connecting the 2 subunits; these bridges are implicated in subunit movement. The polypeptide is Small ribosomal subunit protein uS13 (Methanocaldococcus jannaschii (strain ATCC 43067 / DSM 2661 / JAL-1 / JCM 10045 / NBRC 100440) (Methanococcus jannaschii)).